A 376-amino-acid chain; its full sequence is Light-dependent chlorophyll f synthase (376 aa).

The disordered stretch occupies residues 1–22; sequence MKLESDHVIATSDSSDYTSEPT. The span at 11–22 shows a compositional bias: polar residues; it reads TSDSSDYTSEPT. The next 5 helical transmembrane spans lie at 51–68, 140–155, 164–178, 219–240, and 298–312; these read YVGW…TAAT, HFLI…EWEL, WISL…ASVS, LHQL…HGSL, and FLAA…SAAL. H140 serves as a coordination point for a chlorophyll. H220 is a binding site for a chlorophyll.

This sequence belongs to the reaction center PufL/M/PsbA/D family. Homodimer.

It is found in the cellular thylakoid membrane. Synthesizes chlorophyll f or chlorophyllide f (Chl f, 2-formyl chlorophyll a), probably by oxidation of chlorophyll a or chlorophyllide a and reduction of plastoquinone. The reaction is probably light-dependent. Chl f absorbs far red light (FRL, 707 nm in 100% methanol), and is synthesized when cells are grown in FRL, where it provides the advantage of extending the spectral range of harvested light in terrestrial cyanobacteria. When ectopically expressed in Synechococcus PCC 7002 (which does not grow in FRL and does not make Chl f) produces Chl f (0.059% of total chlorophyll). This Chlorogloeopsis fritschii (strain PCC 9212) protein is Light-dependent chlorophyll f synthase.